Consider the following 178-residue polypeptide: Large ribosomal subunit protein uL6 (178 aa).

The protein belongs to the universal ribosomal protein uL6 family. In terms of assembly, part of the 50S ribosomal subunit.

In terms of biological role, this protein binds to the 23S rRNA, and is important in its secondary structure. It is located near the subunit interface in the base of the L7/L12 stalk, and near the tRNA binding site of the peptidyltransferase center. The protein is Large ribosomal subunit protein uL6 of Corynebacterium kroppenstedtii (strain DSM 44385 / JCM 11950 / CIP 105744 / CCUG 35717).